Here is a 299-residue protein sequence, read N- to C-terminus: 4-diphosphocytidyl-2-C-methyl-D-erythritol kinase (299 aa).

Residue K16 is part of the active site. Position 101-111 (P101–A111) interacts with ATP. The active site involves D143.

Belongs to the GHMP kinase family. IspE subfamily.

The enzyme catalyses 4-CDP-2-C-methyl-D-erythritol + ATP = 4-CDP-2-C-methyl-D-erythritol 2-phosphate + ADP + H(+). It participates in isoprenoid biosynthesis; isopentenyl diphosphate biosynthesis via DXP pathway; isopentenyl diphosphate from 1-deoxy-D-xylulose 5-phosphate: step 3/6. Its function is as follows. Catalyzes the phosphorylation of the position 2 hydroxy group of 4-diphosphocytidyl-2C-methyl-D-erythritol. The protein is 4-diphosphocytidyl-2-C-methyl-D-erythritol kinase of Rhodopseudomonas palustris (strain ATCC BAA-98 / CGA009).